Here is a 42-residue protein sequence, read N- to C-terminus: MEGLTKFLSTAPVLIMALLTFTAGLLIEFNRFYPDLLFHPLG.

A helical transmembrane segment spans residues 7-27 (FLSTAPVLIMALLTFTAGLLI).

This sequence belongs to the PsaJ family.

It localises to the cellular thylakoid membrane. May help in the organization of the PsaE and PsaF subunits. This is Photosystem I reaction center subunit IX from Rippkaea orientalis (strain PCC 8801 / RF-1) (Cyanothece sp. (strain PCC 8801)).